The following is a 132-amino-acid chain: Pre-histone-like nucleoprotein (132 aa).

Positions 2–23 (AILISPSNNTGWGLGTHKLFGG) are excised as a propeptide. Positions 124 to 132 (RRKRRVRSK) match the Nuclear localization signal motif.

Belongs to the adenoviridae histone-like nucleoprotein family. As to quaternary structure, interacts with the core-capsid bridging protein; this interaction bridges the virus core to the capsid. Interacts with host NPM1; this interaction might play a role in placing the pre-histone-like nucleoprotein on the viral DNA or regulating viral gene expression. Interacts with host HMGB1; this interaction inhibits host immune response. Cleaved near the N-terminus by the viral protease during virion maturation to form the mature protein.

It is found in the virion. It localises to the host nucleus. Its subcellular location is the host nucleolus. In terms of biological role, plays a role in the inhibition of host immune response within the nucleus. Interacts with cellular nucleosomes and immobilizes the host immune danger signal HMGB1 on chromatin. In turn, prevents HMGB1 release out of the cell and thus decreases inflammation. Also plays a role in the wrapping and condensation of the viral DNA. May also promote viral genome import into the nucleus. In Canine adenovirus serotype 1 (strain CLL) (CAdV-1), this protein is Pre-histone-like nucleoprotein.